The chain runs to 183 residues: Hypoxanthine/guanine phosphoribosyltransferase (183 aa).

This sequence belongs to the purine/pyrimidine phosphoribosyltransferase family. Archaeal HPRT subfamily. As to quaternary structure, homodimer.

It is found in the cytoplasm. It catalyses the reaction IMP + diphosphate = hypoxanthine + 5-phospho-alpha-D-ribose 1-diphosphate. The catalysed reaction is GMP + diphosphate = guanine + 5-phospho-alpha-D-ribose 1-diphosphate. Its pathway is purine metabolism; IMP biosynthesis via salvage pathway; IMP from hypoxanthine: step 1/1. Functionally, catalyzes a salvage reaction resulting in the formation of IMP that is energically less costly than de novo synthesis. The polypeptide is Hypoxanthine/guanine phosphoribosyltransferase (Methanocaldococcus infernus (strain DSM 11812 / JCM 15783 / ME)).